Consider the following 490-residue polypeptide: Beta-1,3-glucan-binding protein 1 (490 aa).

The first 19 residues, 1–19, serve as a signal peptide directing secretion; that stretch reads MYKQTVVIFLLCFFICVSC. The region spanning 20-119 is the CBM39 domain; it reads YEVPPAKLEA…GEWTVTGYVD (100 aa). The 339-residue stretch at 152 to 490 folds into the GH16 domain; sequence PPTSQNTYPC…QVDYVRVYAL (339 aa). Asn372 carries N-linked (GlcNAc...) asparagine glycosylation.

Belongs to the insect beta-1,3-glucan binding protein family. Monomer. As to expression, hemolymph.

Its subcellular location is the secreted. Its function is as follows. Plays a role in the recognition of invading microorganisms activating the phenoloxidase cascade. Binds specifically to beta-1,3-glucan. Binds the Aspergillus niger cell wall component alpha-1,3-glucan, a fungal pathogen-associated molecular pattern (PAMP) that activates the host immune response. This Galleria mellonella (Greater wax moth) protein is Beta-1,3-glucan-binding protein 1.